A 484-amino-acid polypeptide reads, in one-letter code: tRNA sulfurtransferase (484 aa).

Residues 63 to 167 (QAFGERLACI…GDKLYMVTKR (105 aa)) enclose the THUMP domain. Residues 185 to 186 (LI), Lys-267, Gly-289, and Gln-298 contribute to the ATP site. A disulfide bridge connects residues Cys-346 and Cys-458. Positions 406–484 (IDTNEVVIDI…GYHNVKVYRP (79 aa)) constitute a Rhodanese domain. The active-site Cysteine persulfide intermediate is Cys-458.

It belongs to the ThiI family.

It localises to the cytoplasm. The enzyme catalyses [ThiI sulfur-carrier protein]-S-sulfanyl-L-cysteine + a uridine in tRNA + 2 reduced [2Fe-2S]-[ferredoxin] + ATP + H(+) = [ThiI sulfur-carrier protein]-L-cysteine + a 4-thiouridine in tRNA + 2 oxidized [2Fe-2S]-[ferredoxin] + AMP + diphosphate. The catalysed reaction is [ThiS sulfur-carrier protein]-C-terminal Gly-Gly-AMP + S-sulfanyl-L-cysteinyl-[cysteine desulfurase] + AH2 = [ThiS sulfur-carrier protein]-C-terminal-Gly-aminoethanethioate + L-cysteinyl-[cysteine desulfurase] + A + AMP + 2 H(+). It participates in cofactor biosynthesis; thiamine diphosphate biosynthesis. Functionally, catalyzes the ATP-dependent transfer of a sulfur to tRNA to produce 4-thiouridine in position 8 of tRNAs, which functions as a near-UV photosensor. Also catalyzes the transfer of sulfur to the sulfur carrier protein ThiS, forming ThiS-thiocarboxylate. This is a step in the synthesis of thiazole, in the thiamine biosynthesis pathway. The sulfur is donated as persulfide by IscS. This Shewanella sp. (strain MR-4) protein is tRNA sulfurtransferase.